Consider the following 349-residue polypeptide: S-adenosylmethionine:tRNA ribosyltransferase-isomerase (349 aa).

It belongs to the QueA family. As to quaternary structure, monomer.

It is found in the cytoplasm. It catalyses the reaction 7-aminomethyl-7-carbaguanosine(34) in tRNA + S-adenosyl-L-methionine = epoxyqueuosine(34) in tRNA + adenine + L-methionine + 2 H(+). The protein operates within tRNA modification; tRNA-queuosine biosynthesis. Functionally, transfers and isomerizes the ribose moiety from AdoMet to the 7-aminomethyl group of 7-deazaguanine (preQ1-tRNA) to give epoxyqueuosine (oQ-tRNA). The sequence is that of S-adenosylmethionine:tRNA ribosyltransferase-isomerase from Pseudomonas putida (strain W619).